Consider the following 92-residue polypeptide: Probable Fe(2+)-trafficking protein (92 aa).

Belongs to the Fe(2+)-trafficking protein family.

Its function is as follows. Could be a mediator in iron transactions between iron acquisition and iron-requiring processes, such as synthesis and/or repair of Fe-S clusters in biosynthetic enzymes. The protein is Probable Fe(2+)-trafficking protein of Shewanella woodyi (strain ATCC 51908 / MS32).